The primary structure comprises 433 residues: MTESVRLPVARLKPSTVALPGSKSISNRTLLLAALSDNACEIHSLLKSDDTDRMLEALDKLGVQIEYLAEDRLKVHGTGGRFPNRTADLFLGNAGTAFRPLTAALAVLGGDYHLHGVPRMHERPIGDLVDALRIAGADVEYLGKEHYPPLHIGERQDNGERVIPIKGNVSSQFLTALLMALPLTGQAFEIRMVGELISKPYIDITLKLMAQFGVQVINEGYRVFKIPADAHYHAPEHLHVEGDASSASYFLAAGLIAATPVRVTGIGANSIQGDVAFARELEKIGADVVWGENFVEVSRPKERAVQSFDLDANHIPDAAMTLAIVALATGQTCTLRNIGSWRVKETDRIAAMANELRKLGAKVVEEAEAIHITPPETLTPDAVIDTYDDHRMAMCFSLVSLLGVPVVINDPKCTHKTFPTYFDVFSSLTETAE.

3-phosphoshikimate is bound by residues lysine 23, serine 24, and arginine 28. Lysine 23 serves as a coordination point for phosphoenolpyruvate. Residues glycine 95 and arginine 123 each contribute to the phosphoenolpyruvate site. 3-phosphoshikimate is bound by residues serine 170, serine 171, glutamine 172, serine 198, aspartate 317, and lysine 344. A phosphoenolpyruvate-binding site is contributed by glutamine 172. Aspartate 317 (proton acceptor) is an active-site residue. Positions 348, 391, and 416 each coordinate phosphoenolpyruvate.

The protein belongs to the EPSP synthase family. Monomer.

Its subcellular location is the cytoplasm. The enzyme catalyses 3-phosphoshikimate + phosphoenolpyruvate = 5-O-(1-carboxyvinyl)-3-phosphoshikimate + phosphate. The protein operates within metabolic intermediate biosynthesis; chorismate biosynthesis; chorismate from D-erythrose 4-phosphate and phosphoenolpyruvate: step 6/7. Catalyzes the transfer of the enolpyruvyl moiety of phosphoenolpyruvate (PEP) to the 5-hydroxyl of shikimate-3-phosphate (S3P) to produce enolpyruvyl shikimate-3-phosphate and inorganic phosphate. This is 3-phosphoshikimate 1-carboxyvinyltransferase from Neisseria meningitidis serogroup B (strain ATCC BAA-335 / MC58).